The primary structure comprises 120 residues: MLKFTSEHEWLQIEGDIATVGITAHAAEQLGDLVFVELPEVGATFAKDGQAATVESVKAASDVYCPLDGEVTEINQAIVDDPSLVNSDPRGAGWFFKLKLANPADAEGLLNEAAYNELIA.

Residues 17-99 (IATVGITAHA…RGAGWFFKLK (83 aa)) enclose the Lipoyl-binding domain. Lysine 58 carries the N6-lipoyllysine modification.

The protein belongs to the GcvH family. As to quaternary structure, the glycine cleavage system is composed of four proteins: P, T, L and H. Requires (R)-lipoate as cofactor.

In terms of biological role, the glycine cleavage system catalyzes the degradation of glycine. The H protein shuttles the methylamine group of glycine from the P protein to the T protein. The chain is Glycine cleavage system H protein from Allorhizobium ampelinum (strain ATCC BAA-846 / DSM 112012 / S4) (Agrobacterium vitis (strain S4)).